The primary structure comprises 137 residues: Large ribosomal subunit protein uL16 (137 aa).

This sequence belongs to the universal ribosomal protein uL16 family. In terms of assembly, part of the 50S ribosomal subunit.

In terms of biological role, binds 23S rRNA and is also seen to make contacts with the A and possibly P site tRNAs. This chain is Large ribosomal subunit protein uL16, found in Nitratidesulfovibrio vulgaris (strain ATCC 29579 / DSM 644 / CCUG 34227 / NCIMB 8303 / VKM B-1760 / Hildenborough) (Desulfovibrio vulgaris).